Reading from the N-terminus, the 367-residue chain is Cellular tumor antigen p53 (367 aa).

The interval 1–30 (MAEEMEPLLEPTEVFMDLWSMLPYSMQQLP) is transcription activation (acidic). The disordered stretch occupies residues 30–84 (PLPEDHSNWQELSPLEPSDPPPPPPPPPLPLAAAAPPPLNPPTPPRAAPSPVVPS). A compositionally biased stretch (pro residues) spans 46-81 (PSDPPPPPPPPPLPLAAAAPPPLNPPTPPRAAPSPV). A DNA-binding region spans residues 87–278 (DYGGDFDFRV…KIEEENFRKR (192 aa)). Residues C161, H164, C224, and C228 each coordinate Zn(2+). The tract at residues 259 to 266 (RVCACPGR) is interaction with DNA. 2 disordered regions span residues 275–303 (FRKRGGAGGVAKRAMSPPTEAPEPPKKRV) and 333–367 (LAEGGSAPRPSKGRRVKVEGPQPSCGKKLLQKGSD). A Bipartite nuclear localization signal motif is present at residues 286–302 (KRAMSPPTEAPEPPKKR). The interval 308-339 (NEIFYLQVRGRRRYEMLKEINEALQLAEGGSA) is oligomerization. The short motif at 322 to 333 (EMLKEINEALQL) is the Nuclear export signal element. A basic (repression of DNA-binding) region spans residues 347-364 (RVKVEGPQPSCGKKLLQK).

The protein belongs to the p53 family. Binds DNA as a homotetramer. Requires Zn(2+) as cofactor.

It is found in the cytoplasm. Its subcellular location is the nucleus. Multifunctional transcription factor that induces cell cycle arrest, DNA repair or apoptosis upon binding to its target DNA sequence. Acts as a tumor suppressor in many tumor types; induces growth arrest or apoptosis depending on the physiological circumstances and cell type. Negatively regulates cell division by controlling expression of a set of genes required for this process. One of the activated genes is an inhibitor of cyclin-dependent kinases. Apoptosis induction seems to be mediated either by stimulation of BAX and FAS antigen expression, or by repression of Bcl-2 expression. The sequence is that of Cellular tumor antigen p53 (TP53) from Gallus gallus (Chicken).